Here is a 367-residue protein sequence, read N- to C-terminus: Cycloaraneosene synthase sdnA (367 aa).

The signal sequence occupies residues 1 to 24 (MSLYGLFTLATSYLPSVGGGAALA). Mg(2+) contacts are provided by Asp-115, Asn-260, and Ser-264. The DDXXD motif signature appears at 115 to 119 (DDQFD). Residue Asn-276 is glycosylated (N-linked (GlcNAc...) asparagine).

It belongs to the terpene synthase family. Requires Mg(2+) as cofactor.

The catalysed reaction is (2E,6E,10E)-geranylgeranyl diphosphate = cycloaraneosene + diphosphate. The protein operates within antibiotic biosynthesis. Cycloaraneosene synthase; part of the gene cluster that mediates the biosynthesis of sordarin and hypoxysordarin, glycoside antibiotics with a unique tetracyclic diterpene aglycone structure. First, the geranylgeranyl diphosphate synthase sdnC constructs GGDP from farnesyl diphosphate and isopentenyl diphosphate. The diterpene cyclase sdnA then catalyzes the cyclization of GGDP to afford cycloaraneosene. Cycloaraneosene is then hydroxylated four times by the putative cytochrome P450 monooxygenases sdnB, sdnE, sdnF and sdnH to give a hydroxylated cycloaraneosene derivative such as cycloaraneosene-8,9,13,19-tetraol. Although the order of the hydroxylations is unclear, at least C8, C9 and C13 of the cycloaraneosene skeleton are hydroxylated before the sordaricin formation. Dehydration of the 13-hydroxy group of the hydroxylated cycloaraneosene derivative might be catalyzed by an unassigned hypothetical protein such as sdnG and sdnP to construct the cyclopentadiene moiety. The FAD-dependent oxidoreductase sdnN is proposed to catalyze the oxidation at C9 of the hydroxylated cycloaraneosene derivative and also catalyze the Baeyer-Villiger oxidation to give the lactone intermediate. The presumed lactone intermediate would be hydrolyzed to give an acrolein moiety and a carboxylate moiety. Then, [4+2]cycloaddition would occur between the acrolein moiety and the cyclopentadiene moiety to give sordaricin. SdnN might also be involved in the [4+2]cycloaddition after the hypothesized oxidation to accommodate the oxidized product and prompt the [4+2]cycloaddition. GDP-6-deoxy-D-altrose may be biosynthesized from GDP-D-mannose by the putative GDP-mannose-4,6-dehydratase sdnI and the short-chain dehydrogenase sdnK. The glycosyltransferase sdnJ catalyzes the attachment of 6-deoxy-D-altrose onto the 19-hydroxy group of sordaricin to give 4'-O-demethylsordarin. The methyltransferase sdnD would complete the biosynthesis of sordarin. Sordarin can be further modified into hypoxysordarin. The unique acyl chain at the 3'-hydroxy group of hypoxysordarin would be constructed by an iterative type I PKS sdnO and the trans-acting polyketide methyltransferase sdnL. SdnL would be responsible for the introduction of an alpha-methyl group of the polyketide chain. Alternatively, the beta-lactamase-like protein sdnR might be responsible for the cleavage and transfer of the polyketide chain from the PKS sdnO to sordarin. Two putative cytochrome P450 monooxygenases, sdnQ and sdnT, might catalyze the epoxidations of the polyketide chain to complete the biosynthesis of hypoxysordarin. Transcriptional regulators sdnM and sdnS are presumably encoded for the transcriptional regulation of the expression of the sdn gene cluster. This is Cycloaraneosene synthase sdnA from Sordaria araneosa (Pleurage araneosa).